Here is a 247-residue protein sequence, read N- to C-terminus: 3-deoxy-manno-octulosonate cytidylyltransferase (247 aa).

Belongs to the KdsB family.

The protein resides in the cytoplasm. It carries out the reaction 3-deoxy-alpha-D-manno-oct-2-ulosonate + CTP = CMP-3-deoxy-beta-D-manno-octulosonate + diphosphate. The protein operates within nucleotide-sugar biosynthesis; CMP-3-deoxy-D-manno-octulosonate biosynthesis; CMP-3-deoxy-D-manno-octulosonate from 3-deoxy-D-manno-octulosonate and CTP: step 1/1. It participates in bacterial outer membrane biogenesis; lipopolysaccharide biosynthesis. Its function is as follows. Activates KDO (a required 8-carbon sugar) for incorporation into bacterial lipopolysaccharide in Gram-negative bacteria. This is 3-deoxy-manno-octulosonate cytidylyltransferase from Chlorobium limicola (strain DSM 245 / NBRC 103803 / 6330).